The primary structure comprises 319 residues: MKPENKLPVLDLISAEMKTVVNTLQPDLPSWPATGTIAEQRQYYTLERRFWNAGAPEMATRAYMVPTKYGQVETRLFCPQPDSPATLFYLHGGGFILGNLDTHDRIMRLLASYSQCTVIGIDYPLSPEARFPQAIEEIVAACCYFHQQAEDYQINMSRIGFAGDSAGAMLALASALWLRDKQIDCGKIAGVLLWYGLYGLRDSVTRRLLGGVWDGLTQQDLQMYEEAYLSNDADRESPYYCLFNNDLTREVPPCFIAGAEFDPLLDDSRLLYQTLAAHQQPCEFKLYPGTLHAFLHYSRMMKTADEALRDGAQFFTAQL.

The Involved in the stabilization of the negatively charged intermediate by the formation of the oxyanion hole motif lies at 91-93; that stretch reads HGG. Residues S165, D262, and H292 contribute to the active site.

Belongs to the 'GDXG' lipolytic enzyme family. As to quaternary structure, homodimer. Interacts with MalT and MelA.

Its subcellular location is the cytoplasm. In terms of biological role, displays esterase activity towards short chain fatty esters (acyl chain length of up to 8 carbons). Able to hydrolyze triacetylglycerol (triacetin) and tributyrylglycerol (tributyrin), but not trioleylglycerol (triolein) or cholesterol oleate. Negatively regulates MalT activity by antagonizing maltotriose binding. Inhibits MelA galactosidase activity. The sequence is that of Acetyl esterase from Escherichia coli (strain 55989 / EAEC).